A 337-amino-acid chain; its full sequence is Ketol-acid reductoisomerase (NADP(+)) (337 aa).

The 181-residue stretch at 3 to 183 folds into the KARI N-terminal Rossmann domain; the sequence is IDVFYDDDAD…GGGRAGVIPT (181 aa). Residues 26–29, R49, S52, S54, and 84–87 each bind NADP(+); these read YGSQ and DTSQ. The active site involves H109. An NADP(+)-binding site is contributed by G135. Positions 184-329 constitute a KARI C-terminal knotted domain; it reads TFEAETVTDL…EKLRDLMSWV (146 aa). Mg(2+) contacts are provided by D192, E196, E228, and E232. S253 is a substrate binding site.

Belongs to the ketol-acid reductoisomerase family. It depends on Mg(2+) as a cofactor.

It carries out the reaction (2R)-2,3-dihydroxy-3-methylbutanoate + NADP(+) = (2S)-2-acetolactate + NADPH + H(+). The catalysed reaction is (2R,3R)-2,3-dihydroxy-3-methylpentanoate + NADP(+) = (S)-2-ethyl-2-hydroxy-3-oxobutanoate + NADPH + H(+). It participates in amino-acid biosynthesis; L-isoleucine biosynthesis; L-isoleucine from 2-oxobutanoate: step 2/4. It functions in the pathway amino-acid biosynthesis; L-valine biosynthesis; L-valine from pyruvate: step 2/4. Functionally, involved in the biosynthesis of branched-chain amino acids (BCAA). Catalyzes an alkyl-migration followed by a ketol-acid reduction of (S)-2-acetolactate (S2AL) to yield (R)-2,3-dihydroxy-isovalerate. In the isomerase reaction, S2AL is rearranged via a Mg-dependent methyl migration to produce 3-hydroxy-3-methyl-2-ketobutyrate (HMKB). In the reductase reaction, this 2-ketoacid undergoes a metal-dependent reduction by NADPH to yield (R)-2,3-dihydroxy-isovalerate. This Corynebacterium urealyticum (strain ATCC 43042 / DSM 7109) protein is Ketol-acid reductoisomerase (NADP(+)).